The chain runs to 187 residues: MKIIGILGIQGDIEEHEIAVKKINCIPKRIRSVSDLDEIDALIIPGGESTTIGKLMVKYGFIEKIRNLDIPILGTCAGMVLLSKGTGKEQPLLKILNVTIKRNAYGSQKDSFEKEIILDGKKLNAVFIRAPMVDKILEKTVEIISKDGESIVGVREGNIMAISFHPELSNDGIILYEYFLKNFVEKN.

47–49 contributes to the L-glutamine binding site; it reads GES. The Nucleophile role is filled by C76. Residues R102 and 128 to 129 contribute to the L-glutamine site; that span reads IR. Active-site charge relay system residues include H165 and E167.

It belongs to the glutaminase PdxT/SNO family. In the presence of PdxS, forms a dodecamer of heterodimers. Only shows activity in the heterodimer.

It carries out the reaction aldehydo-D-ribose 5-phosphate + D-glyceraldehyde 3-phosphate + L-glutamine = pyridoxal 5'-phosphate + L-glutamate + phosphate + 3 H2O + H(+). The catalysed reaction is L-glutamine + H2O = L-glutamate + NH4(+). It functions in the pathway cofactor biosynthesis; pyridoxal 5'-phosphate biosynthesis. Functionally, catalyzes the hydrolysis of glutamine to glutamate and ammonia as part of the biosynthesis of pyridoxal 5'-phosphate. The resulting ammonia molecule is channeled to the active site of PdxS. The sequence is that of Pyridoxal 5'-phosphate synthase subunit PdxT from Methanococcus vannielii (strain ATCC 35089 / DSM 1224 / JCM 13029 / OCM 148 / SB).